Consider the following 226-residue polypeptide: tRNA (guanine-N(1)-)-methyltransferase (226 aa).

S-adenosyl-L-methionine contacts are provided by residues glycine 110 and 129 to 134; that span reads IGDYIL.

Belongs to the RNA methyltransferase TrmD family. Homodimer.

The protein localises to the cytoplasm. The enzyme catalyses guanosine(37) in tRNA + S-adenosyl-L-methionine = N(1)-methylguanosine(37) in tRNA + S-adenosyl-L-homocysteine + H(+). Its function is as follows. Specifically methylates guanosine-37 in various tRNAs. This is tRNA (guanine-N(1)-)-methyltransferase from Malacoplasma penetrans (strain HF-2) (Mycoplasma penetrans).